We begin with the raw amino-acid sequence, 122 residues long: Large ribosomal subunit protein uL14 (122 aa).

The protein belongs to the universal ribosomal protein uL14 family. Part of the 50S ribosomal subunit. Forms a cluster with proteins L3 and L19. In the 70S ribosome, L14 and L19 interact and together make contacts with the 16S rRNA in bridges B5 and B8.

Functionally, binds to 23S rRNA. Forms part of two intersubunit bridges in the 70S ribosome. In Thermotoga maritima (strain ATCC 43589 / DSM 3109 / JCM 10099 / NBRC 100826 / MSB8), this protein is Large ribosomal subunit protein uL14.